The sequence spans 261 residues: Indole-3-glycerol phosphate synthase (261 aa).

Belongs to the TrpC family.

The enzyme catalyses 1-(2-carboxyphenylamino)-1-deoxy-D-ribulose 5-phosphate + H(+) = (1S,2R)-1-C-(indol-3-yl)glycerol 3-phosphate + CO2 + H2O. Its pathway is amino-acid biosynthesis; L-tryptophan biosynthesis; L-tryptophan from chorismate: step 4/5. In Burkholderia multivorans (strain ATCC 17616 / 249), this protein is Indole-3-glycerol phosphate synthase.